A 623-amino-acid polypeptide reads, in one-letter code: Chaperone protein DnaK (623 aa).

Threonine 175 is subject to Phosphothreonine; by autocatalysis. Positions proline 580 to lysine 623 are disordered. Low complexity predominate over residues asparagine 591 to alanine 603. Basic and acidic residues predominate over residues glutamate 604 to lysine 623.

Belongs to the heat shock protein 70 family.

In terms of biological role, acts as a chaperone. This is Chaperone protein DnaK from Clostridium botulinum (strain Okra / Type B1).